We begin with the raw amino-acid sequence, 469 residues long: MGKTLYQKIYDAHVVREVANETPIIYIDRHLVHEVTSPQAFDGLRTKGRAVRQPNKTFATMDHNVSTQTKDINACGDMARIQMQELMKNCQEFGVTLYDLNHPYQGIVHVMGPEQGLTLPGMTIVCGDSHTATHGAFGALAFGIGTSEVEHVLATQTLKQSRAKTLKIEVQGKTANGITAKDIVLAIIGKLGSAGGTGYIIEFTGEAIEALSMEGRMTLCNMAIEMGAKAGLVAPDETTFAYLKGRQFAPQAPLWDEAVAYWKTLKSDEDAIFDATVTINAAEIAPQVTWGTNPGQVIAIDQIVPRLNSFNDPVERASAEKALAYMGLTEGVNLTDITIDKVFIGSCTNSRIEDLRAAAKIAKGHKVASHVQAIVVPGSGPVKAQAEAEGLDKIFIEAGFEWRLPGCSMCLAMNNDRLNPGERCASTSNRNFEGRQGRGGRTHLVSPAMAAAAAIHGHFADIRTFATVS.

Residues cysteine 347, cysteine 407, and cysteine 410 each coordinate [4Fe-4S] cluster.

The protein belongs to the aconitase/IPM isomerase family. LeuC type 1 subfamily. As to quaternary structure, heterodimer of LeuC and LeuD. [4Fe-4S] cluster serves as cofactor.

The catalysed reaction is (2R,3S)-3-isopropylmalate = (2S)-2-isopropylmalate. Its pathway is amino-acid biosynthesis; L-leucine biosynthesis; L-leucine from 3-methyl-2-oxobutanoate: step 2/4. Catalyzes the isomerization between 2-isopropylmalate and 3-isopropylmalate, via the formation of 2-isopropylmaleate. The sequence is that of 3-isopropylmalate dehydratase large subunit from Proteus mirabilis (strain HI4320).